Reading from the N-terminus, the 156-residue chain is MKMKSGMEQAVSVLLLLSRLPVQASLTSEAISQRLRVSPSYLKKLMRTLVQAGLAESLPGTKGGFTLTKPLADITLYDVYQAVEGRGSMYQGKGLLQSVFEGESHCVLETVMAEIEDKWSNLMREESLQHVMDRVGELYDLEKIDDWVIKQVKGQL.

The region spanning 2 to 133 is the HTH rrf2-type domain; it reads KMKSGMEQAV…REESLQHVMD (132 aa).

The protein is Putative HTH-type transcriptional regulator YwgB (ywgB) of Bacillus subtilis (strain 168).